Consider the following 129-residue polypeptide: UPF0102 protein CT2262 (129 aa).

Belongs to the UPF0102 family.

The chain is UPF0102 protein CT2262 from Chlorobaculum tepidum (strain ATCC 49652 / DSM 12025 / NBRC 103806 / TLS) (Chlorobium tepidum).